The chain runs to 287 residues: Lactamase-like protein nscB (287 aa).

Residues H62, H64, D66, and H67 each contribute to the Zn(2+) site. The active-site Proton donor/acceptor is the D66.

Belongs to the metallo-beta-lactamase superfamily. The cofactor is Zn(2+).

The protein operates within secondary metabolite biosynthesis. Lactamase-like protein; part of the gene cluster that mediates the biosynthesis of neosartoricin B, a prenylated anthracenone that probably exhibits T-cell antiproliferative activity, suggestive of a physiological role as an immunosuppressive agent. The non-reducing polyketide synthase nscA probably synthesizes and cyclizes the decaketide backbone. The hydrolase nscB then mediates the product release through hydrolysis followed by spontaneous decarboxylation. The prenyltransferase nscD catalyzes the addition of the dimethylallyl group to the aromatic C5. The FAD-dependent monooxygenase nscC is then responsible for the stereospecific hydroxylation at C2. Neosartoricin B can be converted into two additional compounds neosartoricins C and D. Neosartoricin C is a spirocyclic compound that is cyclized through the attack of C3 hydroxyl on C14, followed by dehydration. On the other hand, neosartoricin D is a further cyclized compound in which attack of C2 on C14 in neosartoricin C results in the formation of the acetal-containing dioxabicyclo-octanone ring. Both of these compounds are novel and possibly represent related metabolites of the gene cluster. The sequence is that of Lactamase-like protein nscB from Trichophyton verrucosum (strain HKI 0517).